The chain runs to 190 residues: dCTP deaminase (190 aa).

113-118 is a binding site for dCTP; sequence KSTYAR. Glutamate 139 functions as the Proton donor/acceptor in the catalytic mechanism. DCTP-binding residues include glutamine 158, tyrosine 172, lysine 181, and glutamine 182.

The protein belongs to the dCTP deaminase family. As to quaternary structure, homotrimer.

It carries out the reaction dCTP + H2O + H(+) = dUTP + NH4(+). It functions in the pathway pyrimidine metabolism; dUMP biosynthesis; dUMP from dCTP (dUTP route): step 1/2. Functionally, catalyzes the deamination of dCTP to dUTP. The polypeptide is dCTP deaminase (Chlamydia muridarum (strain MoPn / Nigg)).